The primary structure comprises 630 residues: MENNVTTISREELEELREAFNKIDIDNSGYVSDYELQDLFKEASLPLPGYKVREIIEKIFAVTDSNKDGKINFEEFVSLIQELKSKDVSKSYRKSINKKLGITALGGTSSISTEGTQHSYSEEEKVAFVNWINKALQDDPDCKHILPMNPSDASLFKSLADGILLCKMINFSQPDTIDERAINKKKLTPFTISENLNLALNSASAIGCTVVNIGSQDLQEGKPHLVLGLLWQIIKVGLFADIEISRNEALIALLNEGEELDQLMKLSPEELLLRWVNYHLANAGWQKISNFSQDIRDSRAYYHLLNQIAPKGDDFDEIHVEIDFSGFNDKNDLRRAECMLQQADKLGCRQFVTPADVVAGNPKLNLAFVANLFNTYPALHKPDNSSYDLTLLEGESNEERTFRNWMNSLGVSPYVNHLYSDLSDALIIFQLYEMTRVPVDWTHVNKRPYPLLGGNMKKIENCNYAVELGKTKAKFSLVGIAGHDLNEGNPTLTLALIWQLMRRYTLNVLSDLGEGEKVNDEIIIKWVNQTLANANKKTSITSFKDKSISTSLPVLDLIDAIAPKAVRQEMVKREDLSYQDKLNNAKYAISVARKIGARIYALPDDLVEVKPKMVMTVFACLMGRGLNKIK.

The segment at 1 to 114 is fimbrin headpiece; sequence MENNVTTISR…LGGTSSISTE (114 aa). EF-hand domains lie at 11–46 and 51–86; these read EELEELREAFNKIDIDNSGYVSDYELQDLFKEASLP and KVREIIEKIFAVTDSNKDGKINFEEFVSLIQELKSK. The Ca(2+) site is built by Asp24, Asp26, Ser28, Tyr30, Glu35, Asp64, Asn66, Asp68, Lys70, and Glu75. Actin-binding stretches follow at residues 108-375 and 376-624; these read TSSI…LFNT and YPAL…LMGR. The segment at 115–630 is fimbrin core; the sequence is GTQHSYSEEE…LMGRGLNKIK (516 aa). Calponin-homology (CH) domains are found at residues 122–238, 266–377, 396–505, and 517–626; these read EEEK…KVGL, LSPE…NTYP, SNEE…RRYT, and KVND…GRGL.

As to quaternary structure, monomer. The N-terminus is blocked.

Its subcellular location is the cytoplasm. The protein localises to the cell projection. The protein resides in the stereocilium. Its function is as follows. Actin-bundling protein. In the inner ear, it is required for stereocilia formation. Mediates liquid packing of actin filaments that is necessary for stereocilia to grow to their proper dimensions. This Gallus gallus (Chicken) protein is Plastin-1 (PLS1).